Here is a 207-residue protein sequence, read N- to C-terminus: MANYDVLKVDGSKSGSVELSDSVFAIEPNNSVLFEAINLQRASLRQGTHAVKNRSAVRGGGRKPWRQKGTGRARQGTIRAPQWRGGGIVFGPTPRSYAYKMPKKMRRLALRSALSFKVKENNFTIVDNFGFEAPKTKEFKNVLTTLEQPKKVLVVTDSEDVNVELSARNIPGVQVSTAQGLNVLDITSADSVIITESAAKKVEEVLG.

The tract at residues 54 to 76 is disordered; that stretch reads RSAVRGGGRKPWRQKGTGRARQG. Basic residues predominate over residues 60–71; sequence GGRKPWRQKGTG.

Belongs to the universal ribosomal protein uL4 family. As to quaternary structure, part of the 50S ribosomal subunit.

In terms of biological role, one of the primary rRNA binding proteins, this protein initially binds near the 5'-end of the 23S rRNA. It is important during the early stages of 50S assembly. It makes multiple contacts with different domains of the 23S rRNA in the assembled 50S subunit and ribosome. Its function is as follows. Forms part of the polypeptide exit tunnel. The polypeptide is Large ribosomal subunit protein uL4 (Staphylococcus haemolyticus (strain JCSC1435)).